The following is a 349-amino-acid chain: Microbial Terpene synthase-like protein 1 (349 aa).

Mg(2+) contacts are provided by Asp-98, Asp-102, Asn-243, and Ser-247. A DDXXD motif motif is present at residues 98–102 (DDILD).

The protein belongs to the terpene synthase family. Mg(2+) serves as cofactor.

It functions in the pathway secondary metabolite biosynthesis; terpenoid biosynthesis. In terms of biological role, sesquiterpene synthase converting farnesyl diphosphate to six sesquiterpenes, with beta-elemene, delta-cadinene and an unidentified oxygenated sesquiterpene as the major products. Has no diterpene synthase activity. The protein is Microbial Terpene synthase-like protein 1 of Selaginella moellendorffii (Spikemoss).